Reading from the N-terminus, the 145-residue chain is 3-hydroxyacyl-[acyl-carrier-protein] dehydratase FabZ (145 aa).

His-49 is a catalytic residue.

This sequence belongs to the thioester dehydratase family. FabZ subfamily.

The protein resides in the cytoplasm. It catalyses the reaction a (3R)-hydroxyacyl-[ACP] = a (2E)-enoyl-[ACP] + H2O. Its function is as follows. Involved in unsaturated fatty acids biosynthesis. Catalyzes the dehydration of short chain beta-hydroxyacyl-ACPs and long chain saturated and unsaturated beta-hydroxyacyl-ACPs. The sequence is that of 3-hydroxyacyl-[acyl-carrier-protein] dehydratase FabZ from Rickettsia peacockii (strain Rustic).